A 596-amino-acid chain; its full sequence is uncharacterized protein (596 aa).

One can recognise a Helicase ATP-binding domain in the interval 44-203 (KYLASQPRDF…PFVTYALDAD (160 aa)). Positions 285 to 432 (RLRQLRTHVP…PHRESTDNPL (148 aa)) constitute a Helicase C-terminal domain. Disordered stretches follow at residues 420 to 444 (LGKPHRESTDNPLGGNPATMTQTEQ) and 506 to 533 (EQLQKRTAAQQASSTPDRTSGAPASVHG). Positions 510–523 (KRTAAQQASSTPDR) are enriched in polar residues.

This sequence to M.tuberculosis Rv2917.

This is an uncharacterized protein from Mycobacterium leprae (strain TN).